Consider the following 1058-residue polypeptide: Carbamoyl phosphate synthase large chain (1058 aa).

The carboxyphosphate synthetic domain stretch occupies residues 1–401; it reads MPKRTDIKKI…SLLKACRSLE (401 aa). 12 residues coordinate ATP: R129, R169, G175, G176, K208, I210, E215, G241, I242, H243, Q284, and E298. The 195-residue stretch at 133 to 327 folds into the ATP-grasp 1 domain; the sequence is KALMKALKQP…IAKIAAKIAI (195 aa). Residues Q284, E298, and N300 each coordinate Mg(2+). Positions 284, 298, and 300 each coordinate Mn(2+). The interval 402 to 546 is oligomerization domain; it reads IGIYHNECKE…YSTYAFENES (145 aa). A carbamoyl phosphate synthetic domain region spans residues 547–929; sequence QASPNKSILV…ALYKAFEASY (383 aa). Positions 671 to 861 constitute an ATP-grasp 2 domain; it reads EKALHDINIP…MAQVATKLIL (191 aa). Positions 707, 746, 748, 752, 777, 778, 779, 780, 820, and 832 each coordinate ATP. Mg(2+)-binding residues include Q820, E832, and N834. 3 residues coordinate Mn(2+): Q820, E832, and N834. Residues 930–1058 enclose the MGS-like domain; sequence MHVPDFGNII…ESRSFSIQSL (129 aa). The allosteric domain stretch occupies residues 930 to 1058; it reads MHVPDFGNII…ESRSFSIQSL (129 aa).

The protein belongs to the CarB family. As to quaternary structure, composed of two chains; the small (or glutamine) chain promotes the hydrolysis of glutamine to ammonia, which is used by the large (or ammonia) chain to synthesize carbamoyl phosphate. Tetramer of heterodimers (alpha,beta)4. The cofactor is Mg(2+). Requires Mn(2+) as cofactor.

It carries out the reaction hydrogencarbonate + L-glutamine + 2 ATP + H2O = carbamoyl phosphate + L-glutamate + 2 ADP + phosphate + 2 H(+). It catalyses the reaction hydrogencarbonate + NH4(+) + 2 ATP = carbamoyl phosphate + 2 ADP + phosphate + 2 H(+). Its pathway is amino-acid biosynthesis; L-arginine biosynthesis; carbamoyl phosphate from bicarbonate: step 1/1. The protein operates within pyrimidine metabolism; UMP biosynthesis via de novo pathway; (S)-dihydroorotate from bicarbonate: step 1/3. Functionally, large subunit of the glutamine-dependent carbamoyl phosphate synthetase (CPSase). CPSase catalyzes the formation of carbamoyl phosphate from the ammonia moiety of glutamine, carbonate, and phosphate donated by ATP, constituting the first step of 2 biosynthetic pathways, one leading to arginine and/or urea and the other to pyrimidine nucleotides. The large subunit (synthetase) binds the substrates ammonia (free or transferred from glutamine from the small subunit), hydrogencarbonate and ATP and carries out an ATP-coupled ligase reaction, activating hydrogencarbonate by forming carboxy phosphate which reacts with ammonia to form carbamoyl phosphate. This is Carbamoyl phosphate synthase large chain from Streptococcus uberis (strain ATCC BAA-854 / 0140J).